Reading from the N-terminus, the 194-residue chain is Peptidyl-tRNA hydrolase (194 aa).

Y17 contributes to the tRNA binding site. H22 acts as the Proton acceptor in catalysis. TRNA-binding residues include F68, N70, and N116.

Belongs to the PTH family. Monomer.

Its subcellular location is the cytoplasm. The enzyme catalyses an N-acyl-L-alpha-aminoacyl-tRNA + H2O = an N-acyl-L-amino acid + a tRNA + H(+). In terms of biological role, hydrolyzes ribosome-free peptidyl-tRNAs (with 1 or more amino acids incorporated), which drop off the ribosome during protein synthesis, or as a result of ribosome stalling. Its function is as follows. Catalyzes the release of premature peptidyl moieties from peptidyl-tRNA molecules trapped in stalled 50S ribosomal subunits, and thus maintains levels of free tRNAs and 50S ribosomes. The polypeptide is Peptidyl-tRNA hydrolase (Shewanella woodyi (strain ATCC 51908 / MS32)).